Consider the following 215-residue polypeptide: UPF0502 protein CKO_01995 (215 aa).

It belongs to the UPF0502 family.

This chain is UPF0502 protein CKO_01995, found in Citrobacter koseri (strain ATCC BAA-895 / CDC 4225-83 / SGSC4696).